A 174-amino-acid polypeptide reads, in one-letter code: MAPANLGLTPHWVMLLGAVLLLLLSGASAQEPPRVGCSEYTNRSCEECLRNVSCLWCNENKACMDYPVRKILPPASLCKLSSARWGVCWVNFEALIITMSVLGGSVLLGITVCCCYCCRRKKSRKPDKSDERAMREQEERRVRQEERRAEMKSRHDEIRKKYGLFKEQNPYEKF.

A signal peptide spans 1 to 29; it reads MAPANLGLTPHWVMLLGAVLLLLLSGASA. Residues 30 to 93 lie on the Extracellular side of the membrane; that stretch reads QEPPRVGCSE…RWGVCWVNFE (64 aa). The 54-residue stretch at 36 to 89 folds into the PSI domain; it reads GCSEYTNRSCEECLRNVSCLWCNENKACMDYPVRKILPPASLCKLSSARWGVCW. 2 N-linked (GlcNAc...) asparagine glycosylation sites follow: N42 and N51. Residues 94–114 form a helical membrane-spanning segment; it reads ALIITMSVLGGSVLLGITVCC. The Cytoplasmic portion of the chain corresponds to 115–174; it reads CYCCRRKKSRKPDKSDERAMREQEERRVRQEERRAEMKSRHDEIRKKYGLFKEQNPYEKF. The tract at residues 125 to 155 is disordered; that stretch reads KPDKSDERAMREQEERRVRQEERRAEMKSRH. Over residues 126-155 the composition is skewed to basic and acidic residues; sequence PDKSDERAMREQEERRVRQEERRAEMKSRH. Positions 127–163 form a coiled coil; the sequence is DKSDERAMREQEERRVRQEERRAEMKSRHDEIRKKYG. A Phosphotyrosine modification is found at Y171.

In terms of assembly, interacts with PTTG1.

Its subcellular location is the cell membrane. The protein localises to the cytoplasm. It localises to the nucleus. In terms of biological role, may facilitate PTTG1 nuclear translocation. In Mus musculus (Mouse), this protein is Pituitary tumor-transforming gene 1 protein-interacting protein (Pttg1ip).